Reading from the N-terminus, the 312-residue chain is Methionyl-tRNA formyltransferase (312 aa).

112-115 (SLLP) provides a ligand contact to (6S)-5,6,7,8-tetrahydrofolate.

This sequence belongs to the Fmt family.

It carries out the reaction L-methionyl-tRNA(fMet) + (6R)-10-formyltetrahydrofolate = N-formyl-L-methionyl-tRNA(fMet) + (6S)-5,6,7,8-tetrahydrofolate + H(+). Functionally, attaches a formyl group to the free amino group of methionyl-tRNA(fMet). The formyl group appears to play a dual role in the initiator identity of N-formylmethionyl-tRNA by promoting its recognition by IF2 and preventing the misappropriation of this tRNA by the elongation apparatus. This chain is Methionyl-tRNA formyltransferase, found in Dehalococcoides mccartyi (strain CBDB1).